The sequence spans 118 residues: uncharacterized protein (118 aa).

The disordered stretch occupies residues A25–R85. The segment covering R71–R83 has biased composition (low complexity).

This is an uncharacterized protein from Azospirillum brasilense.